A 162-amino-acid polypeptide reads, in one-letter code: Sec-independent protein translocase protein TatB (162 aa).

Residues 1–21 form a helical membrane-spanning segment; it reads MFDLGWTELLVIGVVALIVVG. Disordered stretches follow at residues 69 to 111 and 124 to 162; these read ATNP…DRAE and AADR…ETKA. Basic and acidic residues-rich tracts occupy residues 83 to 111 and 124 to 141; these read ATRD…DRAE and AADR…KAEE. Over residues 144–155 the composition is skewed to low complexity; it reads AALSATPASTAS.

It belongs to the TatB family. As to quaternary structure, the Tat system comprises two distinct complexes: a TatABC complex, containing multiple copies of TatA, TatB and TatC subunits, and a separate TatA complex, containing only TatA subunits. Substrates initially bind to the TatABC complex, which probably triggers association of the separate TatA complex to form the active translocon.

The protein localises to the cell inner membrane. In terms of biological role, part of the twin-arginine translocation (Tat) system that transports large folded proteins containing a characteristic twin-arginine motif in their signal peptide across membranes. Together with TatC, TatB is part of a receptor directly interacting with Tat signal peptides. TatB may form an oligomeric binding site that transiently accommodates folded Tat precursor proteins before their translocation. This Ruegeria sp. (strain TM1040) (Silicibacter sp.) protein is Sec-independent protein translocase protein TatB.